A 637-amino-acid polypeptide reads, in one-letter code: Cell division cycle-related protein res1/sct1 (637 aa).

The HTH APSES-type domain occupies 6 to 112; the sequence is IHKITYSGVE…YSGSAFMPMS (107 aa). A DNA-binding region (H-T-H motif) is located at residues 37 to 58; that stretch reads ATQILKIAELDKPRRTRILEKF. A disordered region spans residues 114–137; it reads FTPQSNRKPTEAYRRNSPVKKSFS. ANK repeat units lie at residues 236-265 and 357-386; these read DGHT…NVVA and HGDT…SSSI.

As to quaternary structure, DSC1 contains cdc10 and sct1/res1.

Acts as a positive regulator of the mitotic cell cycle and as a negative regulator of sexual differentiation. May be involved in the transcriptional regulation of the cdc22 and cdt1 genes. Is an integral component of the DSC1-like complex. The chain is Cell division cycle-related protein res1/sct1 (res1) from Schizosaccharomyces pombe (strain 972 / ATCC 24843) (Fission yeast).